The chain runs to 348 residues: Dihydroorotase (348 aa).

2 residues coordinate Zn(2+): histidine 17 and histidine 19. Substrate is bound by residues 19–21 and asparagine 45; that span reads HLR. Residues lysine 103, histidine 140, and histidine 178 each contribute to the Zn(2+) site. Lysine 103 carries the post-translational modification N6-carboxylysine. Histidine 140 is a binding site for substrate. Position 223 (leucine 223) interacts with substrate. Aspartate 251 lines the Zn(2+) pocket. Residue aspartate 251 is part of the active site. Substrate contacts are provided by histidine 255 and alanine 267.

This sequence belongs to the metallo-dependent hydrolases superfamily. DHOase family. Class II DHOase subfamily. In terms of assembly, homodimer. The cofactor is Zn(2+).

It catalyses the reaction (S)-dihydroorotate + H2O = N-carbamoyl-L-aspartate + H(+). It functions in the pathway pyrimidine metabolism; UMP biosynthesis via de novo pathway; (S)-dihydroorotate from bicarbonate: step 3/3. Its function is as follows. Catalyzes the reversible cyclization of carbamoyl aspartate to dihydroorotate. This chain is Dihydroorotase, found in Shigella boydii serotype 18 (strain CDC 3083-94 / BS512).